The primary structure comprises 221 residues: Imidazoleglycerol-phosphate dehydratase (221 aa).

The protein belongs to the imidazoleglycerol-phosphate dehydratase family.

It catalyses the reaction D-erythro-1-(imidazol-4-yl)glycerol 3-phosphate = 3-(imidazol-4-yl)-2-oxopropyl phosphate + H2O. Its pathway is amino-acid biosynthesis; L-histidine biosynthesis; L-histidine from 5-phospho-alpha-D-ribose 1-diphosphate: step 6/9. The sequence is that of Imidazoleglycerol-phosphate dehydratase (HIS3) from Kluyveromyces marxianus (Yeast).